The sequence spans 109 residues: Iron-sulfur cluster assembly protein CyaY (109 aa).

This sequence belongs to the frataxin family.

In terms of biological role, involved in iron-sulfur (Fe-S) cluster assembly. May act as a regulator of Fe-S biogenesis. This Acidovorax ebreus (strain TPSY) (Diaphorobacter sp. (strain TPSY)) protein is Iron-sulfur cluster assembly protein CyaY.